The sequence spans 34 residues: Photosystem II reaction center protein M (34 aa).

A helical transmembrane segment spans residues 5–25 (ILAFIATALFVLIPTAFLIIL).

It belongs to the PsbM family. In terms of assembly, PSII is composed of 1 copy each of membrane proteins PsbA, PsbB, PsbC, PsbD, PsbE, PsbF, PsbH, PsbI, PsbJ, PsbK, PsbL, PsbM, PsbT, PsbX, PsbY, PsbZ, Psb30/Ycf12, at least 3 peripheral proteins of the oxygen-evolving complex and a large number of cofactors. It forms dimeric complexes.

The protein resides in the plastid. Its subcellular location is the chloroplast thylakoid membrane. One of the components of the core complex of photosystem II (PSII). PSII is a light-driven water:plastoquinone oxidoreductase that uses light energy to abstract electrons from H(2)O, generating O(2) and a proton gradient subsequently used for ATP formation. It consists of a core antenna complex that captures photons, and an electron transfer chain that converts photonic excitation into a charge separation. This subunit is found at the monomer-monomer interface. In Zygnema circumcarinatum (Green alga), this protein is Photosystem II reaction center protein M.